Reading from the N-terminus, the 194-residue chain is Outer membrane protein A (194 aa).

The signal sequence occupies residues 1 to 24; sequence MNKPSKFALALAFAAVTASGVASA. Residues 30–38 traverse the membrane as a beta stranded segment; that stretch reads WRNPYGNVW. Residues 77–193 enclose the OmpA-like domain; it reads MAAKVVFNAD…RVEIEIVGSR (117 aa).

It belongs to the outer membrane OOP (TC 1.B.6) superfamily.

It is found in the cell outer membrane. Its function is as follows. Structural protein that may protect the integrity of the bacterium. In Bordetella avium, this protein is Outer membrane protein A.